A 203-amino-acid polypeptide reads, in one-letter code: ATP-dependent Clp protease proteolytic subunit (203 aa).

The active-site Nucleophile is the Ser107. Residue His132 is part of the active site.

The protein belongs to the peptidase S14 family. Fourteen ClpP subunits assemble into 2 heptameric rings which stack back to back to give a disk-like structure with a central cavity, resembling the structure of eukaryotic proteasomes.

Its subcellular location is the cytoplasm. It carries out the reaction Hydrolysis of proteins to small peptides in the presence of ATP and magnesium. alpha-casein is the usual test substrate. In the absence of ATP, only oligopeptides shorter than five residues are hydrolyzed (such as succinyl-Leu-Tyr-|-NHMec, and Leu-Tyr-Leu-|-Tyr-Trp, in which cleavage of the -Tyr-|-Leu- and -Tyr-|-Trp bonds also occurs).. Cleaves peptides in various proteins in a process that requires ATP hydrolysis. Has a chymotrypsin-like activity. Plays a major role in the degradation of misfolded proteins. This Shewanella frigidimarina (strain NCIMB 400) protein is ATP-dependent Clp protease proteolytic subunit.